The primary structure comprises 200 residues: ADP-ribosylation factor-like protein 4D (200 aa).

The N-myristoyl glycine moiety is linked to residue Gly-2. GTP-binding positions include 27–34 (GLDSAGKT), 75–79 (DVGGQ), and 134–137 (NKQD).

This sequence belongs to the small GTPase superfamily. Arf family. In terms of assembly, interacts with CYTH2; the interaction is direct and ARL4D GTP-dependent. Does not interact with ARL4D.

The protein resides in the nucleus. It is found in the nucleolus. Its subcellular location is the cell membrane. It localises to the cytoplasm. Its function is as follows. Small GTP-binding protein which cycles between an inactive GDP-bound and an active GTP-bound form, and the rate of cycling is regulated by guanine nucleotide exchange factors (GEF) and GTPase-activating proteins (GAP). GTP-binding protein that does not act as an allosteric activator of the cholera toxin catalytic subunit. Recruits CYTH1, CYTH2, CYTH3 and CYTH4 to the plasma membrane in GDP-bound form. The chain is ADP-ribosylation factor-like protein 4D (ARL4D) from Bos taurus (Bovine).